A 164-amino-acid polypeptide reads, in one-letter code: Transcriptional repressor NrdR (164 aa).

Residues 3–34 (CPKCNYNKSSVVDSRQAEDGNTIRRRRECESC) fold into a zinc finger. The ATP-cone domain maps to 49–139 (LLVIKKDGTR…VYKSFKDLDE (91 aa)).

Belongs to the NrdR family. Zn(2+) serves as cofactor.

Functionally, negatively regulates transcription of bacterial ribonucleotide reductase nrd genes and operons by binding to NrdR-boxes. The polypeptide is Transcriptional repressor NrdR (Streptococcus equi subsp. zooepidemicus (strain H70)).